A 368-amino-acid chain; its full sequence is MSILDVIKQSNDMMPESYKELSRKDMETRVAAIKKKFGSRLFIPGHHYQKDEVIQFADQTGDSLQLAQVAEKNKEADYIVFCGVHFMAETADMLTSEQQTVVLPDMRAGCSMADMADMQQTNRAWKKLQHIFGDTIIPLTYVNSTAEIKAFVGKHGGATVTSSNAKKVLEWAFTQKKRILFLPDQHLGRNTAYDLGIALEDMAVWDPMKDELVAESGHTNVKVILWKGHCSVHEKFTTKNIHDMRERDPDIQIIVHPECSHEVVTLSDDNGSTKYIIDTINQAPAGSKWAIGTEMNLVQRIIHEHPDKQIESLNPDMCPCLTMNRIDLPHLLWSLEQIEKGEPSGVIKVPKAIQEDALLALNRMLSIT.

Residues histidine 46 and serine 63 each coordinate iminosuccinate. A [4Fe-4S] cluster-binding site is contributed by cysteine 110. Residues 141–143 (YVN) and serine 162 each bind iminosuccinate. Residue cysteine 230 participates in [4Fe-4S] cluster binding. Iminosuccinate is bound by residues 256-258 (HPE) and threonine 273. Cysteine 320 is a binding site for [4Fe-4S] cluster.

The protein belongs to the quinolinate synthase family. Type 3 subfamily. In terms of assembly, homotrimer. [4Fe-4S] cluster serves as cofactor.

It is found in the cytoplasm. It catalyses the reaction iminosuccinate + dihydroxyacetone phosphate = quinolinate + phosphate + 2 H2O + H(+). It functions in the pathway cofactor biosynthesis; NAD(+) biosynthesis; quinolinate from iminoaspartate: step 1/1. Catalyzes the condensation of iminoaspartate with dihydroxyacetone phosphate to form quinolinate. This Bacillus subtilis (strain 168) protein is Quinolinate synthase.